The sequence spans 705 residues: MGQEKHVFTIDWAGRQLTVETGQLAKQANGAVLVRYGDTAVLSSATASKEPKPLDFFPLTVNYEERLYAVGKIPGGFIKREGRPSEKAILASRLIDRPIRPLFADGFRNEVQVISIVMSVDQDCSSEMAAMFGSSLALCVSDIPFEGPIAGVTVGRVDGKFIINPNVEQLEQSDINLVVAGTKDAINMVEAGADEVPEETMLEAIMYGHQEIKRLIEFQEEIVKAVGKAKIDIPLYEVDQTLADEVKALAETDLLKAIQVHEKHAREDAISAVKKAVVEKFEEEDRDEATIKQAKDVLNKLVKNEVRRLITEEKVRPDGRGVDQIRPLSSEVGLLPRTHGSGLFTRGQTQALSICTLGALGDVQILDGLGVEESKRFMHHYNFPQFSVGETGPMRGPGRREIGHGALGERALEPVIPSEKDFPYTVRLVSEVLESNGSTSQASICASTLAMMDAGVPIKAPVAGIAMGLVKSGEYYTVLTDIQGMEDALGDMDFKVAGTSKGVTALQMDIKIDGLSKDILEEALQQAKKGRMEILDSMLSTIPTSRGELSRYAPKILTMKINPDKIRDVIGPSGKQINKIIEDTGVKIDIEQDGTIFISSTEEDMNQKAKKIIEDLVREVEVGQLYLGKVKRIEKFGAFLEIFSGKDGLVHISELALDRVGKVEDVVKIGDELLVKVTEIDKQGRVNLSRKAVLREEKEKEEKQS.

2 residues coordinate Mg(2+): D487 and D493. The region spanning 554–613 (PKILTMKINPDKIRDVIGPSGKQINKIIEDTGVKIDIEQDGTIFISSTEEDMNQKAKKII) is the KH domain. The 69-residue stretch at 623–691 (GQLYLGKVKR…KQGRVNLSRK (69 aa)) folds into the S1 motif domain.

The protein belongs to the polyribonucleotide nucleotidyltransferase family. The cofactor is Mg(2+).

The protein resides in the cytoplasm. It catalyses the reaction RNA(n+1) + phosphate = RNA(n) + a ribonucleoside 5'-diphosphate. Functionally, involved in mRNA degradation. Catalyzes the phosphorolysis of single-stranded polyribonucleotides processively in the 3'- to 5'-direction. This Bacillus pumilus (strain SAFR-032) protein is Polyribonucleotide nucleotidyltransferase.